The primary structure comprises 130 residues: uncharacterized protein (130 aa).

The N-terminal stretch at 1–23 (MINRKVVYALSALLLFVYSYAFI) is a signal peptide.

This is an uncharacterized protein from Aquifex aeolicus (strain VF5).